Here is a 201-residue protein sequence, read N- to C-terminus: Transgelin (201 aa).

Ala-2 carries the post-translational modification N-acetylalanine. The Calponin-homology (CH) domain maps to 24–137 (EELEERLVEW…RTLMALGSLA (114 aa)). Residue Ser-166 is modified to Phosphoserine. Lys-172 is subject to N6-acetyllysine. The stretch at 175-200 (IGLQMGSNRGASQAGMTGYGRPRQII) is one Calponin-like repeat. Ser-181 is subject to Phosphoserine. An Omega-N-methylarginine modification is found at Arg-183.

Belongs to the calponin family.

The protein localises to the cytoplasm. Actin cross-linking/gelling protein. Involved in calcium interactions and contractile properties of the cell that may contribute to replicative senescence. The sequence is that of Transgelin (TAGLN) from Homo sapiens (Human).